Consider the following 69-residue polypeptide: Sec-independent protein translocase protein TatA (69 aa).

Residues 1–21 traverse the membrane as a helical segment; it reads MFGLGGQELILILLIILLLFG.

It belongs to the TatA/E family. As to quaternary structure, forms a complex with TatC.

It localises to the cell inner membrane. Its function is as follows. Part of the twin-arginine translocation (Tat) system that transports large folded proteins containing a characteristic twin-arginine motif in their signal peptide across membranes. TatA could form the protein-conducting channel of the Tat system. This is Sec-independent protein translocase protein TatA from Chlorobium phaeovibrioides (strain DSM 265 / 1930) (Prosthecochloris vibrioformis (strain DSM 265)).